Consider the following 357-residue polypeptide: Peptide chain release factor 1 (357 aa).

Q234 carries the post-translational modification N5-methylglutamine. The interval 282 to 313 (DSKKQEQRSNNRKQQVGSGDRSERIRTYNFPQ) is disordered.

Belongs to the prokaryotic/mitochondrial release factor family. Post-translationally, methylated by PrmC. Methylation increases the termination efficiency of RF1.

Its subcellular location is the cytoplasm. Functionally, peptide chain release factor 1 directs the termination of translation in response to the peptide chain termination codons UAG and UAA. This chain is Peptide chain release factor 1, found in Borreliella afzelii (strain PKo) (Borrelia afzelii).